The primary structure comprises 97 residues: Eotaxin (97 aa).

An N-terminal signal peptide occupies residues 1 to 23 (MQSSTALLFLLLTVTSFTSQVLA). 2 disulfide bridges follow: C32–C57 and C33–C73. The O-linked (GalNAc...) threonine glycan is linked to T94.

It belongs to the intercrine beta (chemokine CC) family. In terms of tissue distribution, expressed constitutively in the thymus. Expression inducible in the lung (type I alveolar epithelial cells), intestine, heart, spleen, kidney.

It is found in the secreted. In terms of biological role, in response to the presence of allergens, this protein directly promotes the accumulation of eosinophils (a prominent feature of allergic inflammatory reactions), but not lymphocytes, macrophages or neutrophils. Binds to CCR3. This Mus musculus (Mouse) protein is Eotaxin (Ccl11).